A 403-amino-acid chain; its full sequence is Methylthioribose-1-phosphate isomerase (403 aa).

Residue D277 is the Proton donor of the active site.

The protein belongs to the eIF-2B alpha/beta/delta subunits family. MtnA subfamily.

The protein resides in the cytoplasm. Its subcellular location is the nucleus. The catalysed reaction is 5-(methylsulfanyl)-alpha-D-ribose 1-phosphate = 5-(methylsulfanyl)-D-ribulose 1-phosphate. It participates in amino-acid biosynthesis; L-methionine biosynthesis via salvage pathway; L-methionine from S-methyl-5-thio-alpha-D-ribose 1-phosphate: step 1/6. Its function is as follows. Catalyzes the interconversion of methylthioribose-1-phosphate (MTR-1-P) into methylthioribulose-1-phosphate (MTRu-1-P). The polypeptide is Methylthioribose-1-phosphate isomerase (Lodderomyces elongisporus (strain ATCC 11503 / CBS 2605 / JCM 1781 / NBRC 1676 / NRRL YB-4239) (Yeast)).